The primary structure comprises 335 residues: Mitochondrial thiamine diphosphate carrier 1 (335 aa).

6 consecutive transmembrane segments (helical) span residues 13 to 29 (KRAV…GAIS), 88 to 105 (VPAL…FAVL), 127 to 150 (YLSY…FDLL), 182 to 199 (LYAG…YAGL), 231 to 247 (SLSS…SGTV), and 304 to 323 (GIVP…FVAY). Solcar repeat units follow at residues 13 to 111 (KRAV…VKSF), 124 to 210 (LSPY…FKRW), and 232 to 329 (LSSF…ASDW).

It belongs to the mitochondrial carrier (TC 2.A.29) family.

The protein resides in the mitochondrion inner membrane. Its function is as follows. Mitochondrial transporter that mediates uptake of thiamine diphosphate (ThDP) into mitochondria. This chain is Mitochondrial thiamine diphosphate carrier 1, found in Arabidopsis thaliana (Mouse-ear cress).